Reading from the N-terminus, the 284-residue chain is Nucleotide-binding protein Sbal223_0704 (284 aa).

ATP is bound at residue 8-15; sequence GRSGSGKS. 56 to 59 lines the GTP pocket; sequence DVRN.

This sequence belongs to the RapZ-like family.

Functionally, displays ATPase and GTPase activities. The chain is Nucleotide-binding protein Sbal223_0704 from Shewanella baltica (strain OS223).